The following is a 274-amino-acid chain: Cytochrome b-c1 complex subunit Rieske, mitochondrial (274 aa).

At 79–103 (SHTDVKVPDFCDYRRPEVLDSTKSS) the chain is on the mitochondrial matrix side. Residues 104–140 (RESSEARKSFSYMVTAVTTVGVAYAAKNAVTQFVSSM) traverse the membrane as a helical segment. Residues 141-274 (SASADVLAMA…FTSDDMVVVG (134 aa)) are Mitochondrial intermembrane-facing. Positions 187–272 (EAAVELSQLR…YEFTSDDMVV (86 aa)) constitute a Rieske domain. Positions 217, 219, 236, 239, and 241 each coordinate [2Fe-2S] cluster. A disulfide bond links Cys222 and Cys238.

This sequence belongs to the Rieske iron-sulfur protein family. As to quaternary structure, component of the ubiquinol-cytochrome c oxidoreductase (cytochrome b-c1 complex, complex III, CIII), a multisubunit enzyme composed of 11 subunits. The complex is composed of 3 respiratory subunits cytochrome b, cytochrome c1 and Rieske protein UQCRFS1, 2 core protein subunits UQCRC1/QCR1 and UQCRC2/QCR2, and 6 low-molecular weight protein subunits UQCRH/QCR6, UQCRB/QCR7, UQCRQ/QCR8, UQCR10/QCR9, UQCR11/QCR10 and subunit 9, the cleavage product of Rieske protein UQCRFS1. The complex exists as an obligatory dimer and forms supercomplexes (SCs) in the inner mitochondrial membrane with NADH-ubiquinone oxidoreductase (complex I, CI) and cytochrome c oxidase (complex IV, CIV), resulting in different assemblies (supercomplex SCI(1)III(2)IV(1) and megacomplex MCI(2)III(2)IV(2)). Incorporation of the Rieske protein UQCRFS1 is the penultimate step in complex III assembly. Interacts with TTC19, which is involved in the clearance of UQCRFS1 fragments. In terms of assembly, component of the ubiquinol-cytochrome c oxidoreductase (cytochrome b-c1 complex, complex III, CIII). Subunit 9 corresponds to the mitochondrial targeting sequence (MTS) of Rieske protein UQCRFS1. It is retained after processing and incorporated inside complex III, where it remains bound to the complex and localizes between the 2 core subunits UQCRC1/QCR1 and UQCRC2/QCR2. Requires [2Fe-2S] cluster as cofactor. Proteolytic processing is necessary for the correct insertion of UQCRFS1 in the complex III dimer. Several fragments are generated during UQCRFS1 insertion, most probably due to the endogenous matrix-processing peptidase (MPP) activity of the 2 core protein subunits UQCRC1/QCR1 and UQCRC2/QCR2, which are homologous to the 2 mitochondrial-processing peptidase (MPP) subunits beta-MPP and alpha-MPP respectively. The action of the protease is also necessary for the clearance of the UQCRFS1 fragments.

It localises to the mitochondrion inner membrane. The catalysed reaction is a quinol + 2 Fe(III)-[cytochrome c](out) = a quinone + 2 Fe(II)-[cytochrome c](out) + 2 H(+)(out). Functionally, component of the ubiquinol-cytochrome c oxidoreductase, a multisubunit transmembrane complex that is part of the mitochondrial electron transport chain which drives oxidative phosphorylation. The respiratory chain contains 3 multisubunit complexes succinate dehydrogenase (complex II, CII), ubiquinol-cytochrome c oxidoreductase (cytochrome b-c1 complex, complex III, CIII) and cytochrome c oxidase (complex IV, CIV), that cooperate to transfer electrons derived from NADH and succinate to molecular oxygen, creating an electrochemical gradient over the inner membrane that drives transmembrane transport and the ATP synthase. The cytochrome b-c1 complex catalyzes electron transfer from ubiquinol to cytochrome c, linking this redox reaction to translocation of protons across the mitochondrial inner membrane, with protons being carried across the membrane as hydrogens on the quinol. In the process called Q cycle, 2 protons are consumed from the matrix, 4 protons are released into the intermembrane space and 2 electrons are passed to cytochrome c. The Rieske protein is a catalytic core subunit containing a [2Fe-2S] iron-sulfur cluster. It cycles between 2 conformational states during catalysis to transfer electrons from the quinol bound in the Q(0) site in cytochrome b to cytochrome c1. Incorporation of UQCRFS1 is the penultimate step in complex III assembly. In terms of biological role, component of the ubiquinol-cytochrome c oxidoreductase (cytochrome b-c1 complex, complex III, CIII). UQCRFS1 undergoes proteolytic processing once it is incorporated in the complex III dimer. One of the fragments, called subunit 9, corresponds to its mitochondrial targeting sequence (MTS). The proteolytic processing is necessary for the correct insertion of UQCRFS1 in the complex III dimer, but the persistence of UQCRFS1-derived fragments may prevent newly imported UQCRFS1 to be processed and assembled into complex III and is detrimental for the complex III structure and function. The chain is Cytochrome b-c1 complex subunit Rieske, mitochondrial (UQCRFS1) from Colobus polykomos (Western black-and-white colobus monkey).